Consider the following 317-residue polypeptide: Testis-specific Y-encoded protein 1 (317 aa).

2 disordered regions span residues 1-39 (MSRP…FQVV) and 91-118 (DEEQ…PGGP). Basic and acidic residues-rich tracts occupy residues 15–26 (QGQEERERRSEE) and 95–112 (EQRP…EQGQ).

This sequence belongs to the nucleosome assembly protein (NAP) family. Post-translationally, phosphorylated. As to expression, testis. Probably in spermatogonia.

The protein localises to the cytoplasm. The protein resides in the nucleus. May be involved in sperm differentiation and proliferation. The chain is Testis-specific Y-encoded protein 1 (TSPY1) from Bos taurus (Bovine).